The sequence spans 426 residues: 3-phosphoshikimate 1-carboxyvinyltransferase (426 aa).

3 residues coordinate 3-phosphoshikimate: K22, S23, and R27. Phosphoenolpyruvate is bound at residue K22. Positions 96 and 124 each coordinate phosphoenolpyruvate. 3-phosphoshikimate contacts are provided by S170, S171, Q172, S198, D314, N337, and K341. Phosphoenolpyruvate is bound at residue Q172. D314 serves as the catalytic Proton acceptor. Phosphoenolpyruvate contacts are provided by R345, R387, and K412.

This sequence belongs to the EPSP synthase family. In terms of assembly, monomer.

The protein localises to the cytoplasm. It carries out the reaction 3-phosphoshikimate + phosphoenolpyruvate = 5-O-(1-carboxyvinyl)-3-phosphoshikimate + phosphate. It participates in metabolic intermediate biosynthesis; chorismate biosynthesis; chorismate from D-erythrose 4-phosphate and phosphoenolpyruvate: step 6/7. Functionally, catalyzes the transfer of the enolpyruvyl moiety of phosphoenolpyruvate (PEP) to the 5-hydroxyl of shikimate-3-phosphate (S3P) to produce enolpyruvyl shikimate-3-phosphate and inorganic phosphate. This is 3-phosphoshikimate 1-carboxyvinyltransferase from Vibrio campbellii (strain ATCC BAA-1116).